The following is a 303-amino-acid chain: MSEQPLSQDEKRRLLRERRQAKMARGKASERLNNILSQGSSVKGTTDPVSVFDSKPEPTASSTKPAEVSPAVSSHRDPEDDPDLMDIDNVTPEIKVDEPNIDKMLSDIFGANVGGNATDSSQDDFMANMMNMMKQGEGVDGSTGGTAEPQEPGYQSQLNAYNIYQQRLWKFRFSIIRFAAVLTNFFYHYLTIQDYSFTSSPHFYVRALAPHPAVNSFITWFSTCEVAILASFYLITSKNNIYANASDGNLLLKGISMGAMVLPQLRAYQPLVIRLAHYWEVFSMLLGDIFLVVVLFGLVSIYN.

At Met-1–Leu-168 the chain is on the cytoplasmic side. Residues Arg-19–Asp-86 form a disordered region. Positions Arg-31–Pro-48 are enriched in polar residues. Residues Trp-169–Tyr-189 form a helical membrane-spanning segment. Residues Leu-190–Ser-216 lie on the Lumenal side of the membrane. A helical membrane pass occupies residues Phe-217–Thr-236. Topologically, residues Ser-237–Glu-280 are cytoplasmic. Residues Val-281–Ile-301 traverse the membrane as a helical segment. The Lumenal portion of the chain corresponds to Tyr-302–Asn-303.

This sequence belongs to the GET2 family. In terms of assembly, component of the Golgi to ER traffic (GET) complex, which is composed of GET1, GET2 and GET3. Within the complex, GET1 and GET2 form a heterotetramer which is stabilized by phosphatidylinositol binding and which binds to the GET3 homodimer.

The protein resides in the endoplasmic reticulum membrane. Its subcellular location is the golgi apparatus membrane. Its function is as follows. Required for the post-translational delivery of tail-anchored (TA) proteins to the endoplasmic reticulum. Together with GET1, acts as a membrane receptor for soluble GET3, which recognizes and selectively binds the transmembrane domain of TA proteins in the cytosol. The GET complex cooperates with the HDEL receptor ERD2 to mediate the ATP-dependent retrieval of resident ER proteins that contain a C-terminal H-D-E-L retention signal from the Golgi to the ER. In Debaryomyces hansenii (strain ATCC 36239 / CBS 767 / BCRC 21394 / JCM 1990 / NBRC 0083 / IGC 2968) (Yeast), this protein is Golgi to ER traffic protein 2.